The primary structure comprises 566 residues: Proline--tRNA ligase (566 aa).

This sequence belongs to the class-II aminoacyl-tRNA synthetase family. ProS type 1 subfamily. Homodimer.

Its subcellular location is the cytoplasm. The enzyme catalyses tRNA(Pro) + L-proline + ATP = L-prolyl-tRNA(Pro) + AMP + diphosphate. Its function is as follows. Catalyzes the attachment of proline to tRNA(Pro) in a two-step reaction: proline is first activated by ATP to form Pro-AMP and then transferred to the acceptor end of tRNA(Pro). As ProRS can inadvertently accommodate and process non-cognate amino acids such as alanine and cysteine, to avoid such errors it has two additional distinct editing activities against alanine. One activity is designated as 'pretransfer' editing and involves the tRNA(Pro)-independent hydrolysis of activated Ala-AMP. The other activity is designated 'posttransfer' editing and involves deacylation of mischarged Ala-tRNA(Pro). The misacylated Cys-tRNA(Pro) is not edited by ProRS. This chain is Proline--tRNA ligase, found in Bacillus cytotoxicus (strain DSM 22905 / CIP 110041 / 391-98 / NVH 391-98).